Consider the following 412-residue polypeptide: Divalent metal cation transporter MntH (412 aa).

The next 11 membrane-spanning stretches (helical) occupy residues 19 to 39 (FALM…GNFA), 46 to 66 (ASFG…AMLI), 94 to 114 (VWFY…AEFI), 122 to 142 (LILG…TFLI), 155 to 175 (LVIG…LVFS), 196 to 216 (AVFL…IYLH), 241 to 261 (IAMT…AAAF), 290 to 310 (IFGL…TLAG), 329 to 349 (SVTM…TRIL), 350 to 370 (VMSQ…LLIF), and 389 to 409 (IGWM…IGTL).

Belongs to the NRAMP family.

It is found in the cell inner membrane. H(+)-stimulated, divalent metal cation uptake system. The sequence is that of Divalent metal cation transporter MntH from Enterobacter sp. (strain 638).